Here is a 339-residue protein sequence, read N- to C-terminus: FR-33289 synthase (339 aa).

Positions 150, 152, and 288 each coordinate Fe(2+).

This sequence belongs to the TfdA dioxygenase family. Homodimer. Requires Fe(2+) as cofactor.

The catalysed reaction is 3-(N-acetyl-N-hydroxy)aminopropylphosphonate + 2-oxoglutarate + O2 = (R)-(3-(acetylhydroxyamino)-2-hydroxypropyl)phosphonate + succinate + CO2. Its pathway is antibiotic biosynthesis. Functionally, monooxygenase involved in the biosynthesis of the phosphonate antibiotic FR-33289, an antimalarial agent. Catalyzes the oxidative decarboxylation of the antibiotic FR-900098 (3-(N-acetyl-N-hydroxy)aminopropylphosphonate) to form FR-33289 ((R)-(3-(acetylhydroxyamino)-2-hydroxypropyl)phosphonate). This is FR-33289 synthase from Streptomyces rubellomurinus (strain ATCC 31215).